The following is a 128-amino-acid chain: MSGRGKQGGKARAKAKTRSSRAGLQFPVGRVHRLLRKGNYAERVGAGAPVYLAAVLEYLTAEILELAGNAARDNKKTRIIPRHLQLAIRNDEELNKLLGKVTIAQGGVLPNIQAVLLPKKTESHHKAK.

The interval 1 to 22 is disordered; the sequence is MSGRGKQGGKARAKAKTRSSRA. S2 is modified (N-acetylserine). S2 is subject to Phosphoserine; by RPS6KA5. Position 4 is a citrulline; alternate (R4). R4 carries the symmetric dimethylarginine; by PRMT5; alternate modification. K6 carries the post-translational modification N6-(2-hydroxyisobutyryl)lysine. Over residues 7–19 the composition is skewed to basic residues; that stretch reads QGGKARAKAKTRS. The residue at position 10 (K10) is an N6-(2-hydroxyisobutyryl)lysine; alternate. N6-(beta-hydroxybutyryl)lysine; alternate occurs at positions 10 and 14. K10 carries the post-translational modification N6-lactoyllysine; alternate. Position 10 is an N6-succinyllysine; alternate (K10). Residue K14 forms a Glycyl lysine isopeptide (Lys-Gly) (interchain with G-Cter in ubiquitin); alternate linkage. A Glycyl lysine isopeptide (Lys-Gly) (interchain with G-Cter in ubiquitin) cross-link involves residue K16. The residue at position 37 (K37) is an N6-(2-hydroxyisobutyryl)lysine; alternate. An N6-(beta-hydroxybutyryl)lysine; alternate modification is found at K37. K37 bears the N6-crotonyllysine; alternate mark. K75 and K76 each carry N6-(2-hydroxyisobutyryl)lysine. K96 bears the N6-(2-hydroxyisobutyryl)lysine; alternate mark. The residue at position 96 (K96) is an N6-(beta-hydroxybutyryl)lysine; alternate. An N6-succinyllysine; alternate modification is found at K96. Residue K96 is modified to N6-glutaryllysine; alternate. The residue at position 100 (K100) is an N6-glutaryllysine. The residue at position 105 (Q105) is an N5-methylglutamine. Position 119 is an N6-(2-hydroxyisobutyryl)lysine; alternate (K119). K119 bears the N6-(beta-hydroxybutyryl)lysine; alternate mark. 2 positions are modified to N6-crotonyllysine; alternate: K119 and K120. An N6-glutaryllysine; alternate mark is found at K119 and K120. K120 is covalently cross-linked (Glycyl lysine isopeptide (Lys-Gly) (interchain with G-Cter in ubiquitin); alternate). T121 carries the post-translational modification Phosphothreonine; by DCAF1. K126 carries the post-translational modification N6-crotonyllysine; alternate. K126 is modified (N6-glutaryllysine; alternate).

This sequence belongs to the histone H2A family. The nucleosome is a histone octamer containing two molecules each of H2A, H2B, H3 and H4 assembled in one H3-H4 heterotetramer and two H2A-H2B heterodimers. The octamer wraps approximately 147 bp of DNA. Post-translationally, deiminated on Arg-4 in granulocytes upon calcium entry. In terms of processing, monoubiquitination of Lys-120 (H2AK119Ub) by RING1, TRIM37 and RNF2/RING2 complex gives a specific tag for epigenetic transcriptional repression and participates in X chromosome inactivation of female mammals. It is involved in the initiation of both imprinted and random X inactivation. Ubiquitinated H2A is enriched in inactive X chromosome chromatin. Ubiquitination of H2A functions downstream of methylation of 'Lys-27' of histone H3 (H3K27me). H2AK119Ub by RNF2/RING2 can also be induced by ultraviolet and may be involved in DNA repair. Monoubiquitination of Lys-120 (H2AK119Ub) by TRIM37 may promote transformation of cells in a number of breast cancers. Following DNA double-strand breaks (DSBs), it is ubiquitinated through 'Lys-63' linkage of ubiquitin moieties by the E2 ligase UBE2N and the E3 ligases RNF8 and RNF168, leading to the recruitment of repair proteins to sites of DNA damage. Ubiquitination at Lys-14 and Lys-16 (H2AK13Ub and H2AK15Ub, respectively) in response to DNA damage is initiated by RNF168 that mediates monoubiquitination at these 2 sites, and 'Lys-63'-linked ubiquitin are then conjugated to monoubiquitin; RNF8 is able to extend 'Lys-63'-linked ubiquitin chains in vitro. Deubiquitinated by USP51 at Lys-14 and Lys-16 (H2AK13Ub and H2AK15Ub, respectively) after damaged DNA is repaired. H2AK119Ub and ionizing radiation-induced 'Lys-63'-linked ubiquitination (H2AK13Ub and H2AK15Ub) are distinct events. Phosphorylation on Ser-2 (H2AS1ph) is enhanced during mitosis. Phosphorylation on Ser-2 by RPS6KA5/MSK1 directly represses transcription. Acetylation of H3 inhibits Ser-2 phosphorylation by RPS6KA5/MSK1. Phosphorylation at Thr-121 (H2AT120ph) by DCAF1 is present in the regulatory region of many tumor suppresor genes and down-regulates their transcription. Post-translationally, glutamine methylation at Gln-105 (H2AQ104me) by FBL is specifically dedicated to polymerase I. It is present at 35S ribosomal DNA locus and impairs binding of the FACT complex. In terms of processing, symmetric dimethylation on Arg-4 by the PRDM1/PRMT5 complex may play a crucial role in the germ-cell lineage. Crotonylation (Kcr) is specifically present in male germ cells and marks testis-specific genes in post-meiotic cells, including X-linked genes that escape sex chromosome inactivation in haploid cells. Crotonylation marks active promoters and enhancers and confers resistance to transcriptional repressors. It is also associated with post-meiotically activated genes on autosomes. Post-translationally, lactylated in macrophages by EP300/P300 by using lactoyl-CoA directly derived from endogenous or exogenous lactate, leading to stimulates gene transcription.

It localises to the nucleus. It is found in the chromosome. Functionally, core component of nucleosome. Nucleosomes wrap and compact DNA into chromatin, limiting DNA accessibility to the cellular machineries which require DNA as a template. Histones thereby play a central role in transcription regulation, DNA repair, DNA replication and chromosomal stability. DNA accessibility is regulated via a complex set of post-translational modifications of histones, also called histone code, and nucleosome remodeling. This Homo sapiens (Human) protein is Histone H2A type 1-H.